The sequence spans 127 residues: UPF0738 protein Bsph_1225 (127 aa).

It belongs to the UPF0738 family.

In Lysinibacillus sphaericus (strain C3-41), this protein is UPF0738 protein Bsph_1225.